The chain runs to 312 residues: Pantothenate kinase (312 aa).

97-104 (GSVAVGKS) provides a ligand contact to ATP.

This sequence belongs to the prokaryotic pantothenate kinase family.

The protein resides in the cytoplasm. The catalysed reaction is (R)-pantothenate + ATP = (R)-4'-phosphopantothenate + ADP + H(+). The protein operates within cofactor biosynthesis; coenzyme A biosynthesis; CoA from (R)-pantothenate: step 1/5. The protein is Pantothenate kinase of Corynebacterium glutamicum (strain ATCC 13032 / DSM 20300 / JCM 1318 / BCRC 11384 / CCUG 27702 / LMG 3730 / NBRC 12168 / NCIMB 10025 / NRRL B-2784 / 534).